Here is a 314-residue protein sequence, read N- to C-terminus: DNA-directed RNA polymerase subunit alpha (314 aa).

Residues 1–227 are alpha N-terminal domain (alpha-NTD); that stretch reads MTTFEIECIE…ELLFPLKEIN (227 aa). The alpha C-terminal domain (alpha-CTD) stretch occupies residues 237-314; sequence IEDSKINQIL…LPKEKTSKSN (78 aa).

Belongs to the RNA polymerase alpha chain family. In terms of assembly, in plastids the minimal PEP RNA polymerase catalytic core is composed of four subunits: alpha, beta, beta', and beta''. When a (nuclear-encoded) sigma factor is associated with the core the holoenzyme is formed, which can initiate transcription.

The protein resides in the plastid. Its subcellular location is the chloroplast. It catalyses the reaction RNA(n) + a ribonucleoside 5'-triphosphate = RNA(n+1) + diphosphate. In terms of biological role, DNA-dependent RNA polymerase catalyzes the transcription of DNA into RNA using the four ribonucleoside triphosphates as substrates. This chain is DNA-directed RNA polymerase subunit alpha, found in Pyrenomonas salina.